The following is a 797-amino-acid chain: Protocadherin beta-11 (797 aa).

The N-terminal stretch at 1 to 26 (MENGGTRTQQIRQVLLLFVLLGMSQA) is a signal peptide. Residues 27-690 (GSETWSFSVA…AQTDFLTVYL (664 aa)) are Extracellular-facing. Cadherin domains are found at residues 35–133 (VAEE…SPIF), 138–242 (MLLE…SPEF), 247–347 (YEVK…APEI), 352–451 (ITSP…APTF), and 456–561 (YTLF…SPFV). N-linked (GlcNAc...) asparagine glycans are attached at residues asparagine 418, asparagine 436, asparagine 487, and asparagine 567. The Cadherin 6 domain occupies 568–671 (GSAPCTELVP…LVDGFSQPFL (104 aa)). Residues 691–711 (VVALASVSSLFFFSVLLFVAV) form a helical membrane-spanning segment. Topologically, residues 712 to 797 (RLCRRSRAAS…TFQNSFGFNF (86 aa)) are cytoplasmic.

The protein resides in the cell membrane. In terms of biological role, potential calcium-dependent cell-adhesion protein. May be involved in the establishment and maintenance of specific neuronal connections in the brain. The chain is Protocadherin beta-11 (PCDHB11) from Pan troglodytes (Chimpanzee).